The following is a 485-amino-acid chain: Delta(14)-sterol reductase ERG24A (485 aa).

A run of 4 helical transmembrane segments spans residues 18-38, 77-97, 131-151, and 155-175; these read FFGP…VYVF, GLVS…SLIL, LAVL…WTFM, and FIQI…FVYV. A glycan (N-linked (GlcNAc...) asparagine) is linked at Asn-240. 4 helical membrane passes run 259-279, 285-305, 319-339, and 431-451; these read ILIT…EPAI, ITTD…VPYV, SLGP…FYIF, and AQGW…ILLI.

It belongs to the ERG4/ERG24 family.

It localises to the endoplasmic reticulum membrane. It carries out the reaction 4,4-dimethyl-5alpha-cholesta-8,24-dien-3beta-ol + NADP(+) = 4,4-dimethyl-5alpha-cholesta-8,14,24-trien-3beta-ol + NADPH + H(+). It functions in the pathway steroid metabolism; ergosterol biosynthesis. Its function is as follows. Delta(14)-sterol reductase; part of the third module of ergosterol biosynthesis pathway that includes the late steps of the pathway. Catalyzes the reduction of the C14=C15 double bond within 4,4,24-trimethyl ergosta-8,14,24(28)-trienolto produce 4,4-dimethylfecosterol. The third module or late pathway involves the ergosterol synthesis itself through consecutive reactions that mainly occur in the endoplasmic reticulum (ER) membrane. Firstly, the squalene synthase ERG9 catalyzes the condensation of 2 farnesyl pyrophosphate moieties to form squalene, which is the precursor of all steroids. Squalene synthase is crucial for balancing the incorporation of farnesyl diphosphate (FPP) into sterol and nonsterol isoprene synthesis. Secondly, squalene is converted into lanosterol by the consecutive action of the squalene epoxidase ERG1 and the lanosterol synthase ERG7. Then, the delta(24)-sterol C-methyltransferase ERG6 methylates lanosterol at C-24 to produce eburicol. Eburicol is the substrate of the sterol 14-alpha demethylase encoded by CYP51A, CYP51B and CYP51C, to yield 4,4,24-trimethyl ergosta-8,14,24(28)-trienol. CYP51B encodes the enzyme primarily responsible for sterol 14-alpha-demethylation, and plays an essential role in ascospore formation. CYP51A encodes an additional sterol 14-alpha-demethylase, induced on ergosterol depletion and responsible for the intrinsic variation in azole sensitivity. The third CYP51 isoform, CYP51C, does not encode a sterol 14-alpha-demethylase, but is required for full virulence on host wheat ears. The C-14 reductase ERG24 then reduces the C14=C15 double bond which leads to 4,4-dimethylfecosterol. A sequence of further demethylations at C-4, involving the C-4 demethylation complex containing the C-4 methylsterol oxidases ERG25, the sterol-4-alpha-carboxylate 3-dehydrogenase ERG26 and the 3-keto-steroid reductase ERG27, leads to the production of fecosterol via 4-methylfecosterol. ERG28 has a role as a scaffold to help anchor ERG25, ERG26 and ERG27 to the endoplasmic reticulum. The C-8 sterol isomerase ERG2 then catalyzes the reaction which results in unsaturation at C-7 in the B ring of sterols and thus converts fecosterol to episterol. The sterol-C5-desaturases ERG3A and ERG3BB then catalyze the introduction of a C-5 double bond in the B ring to produce 5-dehydroepisterol. The C-22 sterol desaturases ERG5A and ERG5B further convert 5-dehydroepisterol into ergosta-5,7,22,24(28)-tetraen-3beta-ol by forming the C-22(23) double bond in the sterol side chain. Finally, ergosta-5,7,22,24(28)-tetraen-3beta-ol is substrate of the C-24(28) sterol reductase ERG4 to produce ergosterol. The chain is Delta(14)-sterol reductase ERG24A from Gibberella zeae (strain ATCC MYA-4620 / CBS 123657 / FGSC 9075 / NRRL 31084 / PH-1) (Wheat head blight fungus).